A 220-amino-acid polypeptide reads, in one-letter code: 7-cyano-7-deazaguanine synthase (220 aa).

10 to 20 (FSGGQDSTTCL) is an ATP binding site. 4 residues coordinate Zn(2+): C188, C197, C200, and C203.

It belongs to the QueC family. It depends on Zn(2+) as a cofactor.

It catalyses the reaction 7-carboxy-7-deazaguanine + NH4(+) + ATP = 7-cyano-7-deazaguanine + ADP + phosphate + H2O + H(+). It functions in the pathway purine metabolism; 7-cyano-7-deazaguanine biosynthesis. Functionally, catalyzes the ATP-dependent conversion of 7-carboxy-7-deazaguanine (CDG) to 7-cyano-7-deazaguanine (preQ(0)). This Neisseria meningitidis serogroup C (strain 053442) protein is 7-cyano-7-deazaguanine synthase.